The chain runs to 479 residues: Catalase easC (479 aa).

Over residues M1–G13 the composition is skewed to polar residues. The tract at residues M1–T28 is disordered. The active site involves H53. Y343 lines the heme pocket. Positions H365–R385 are disordered.

This sequence belongs to the catalase family. Heme is required as a cofactor.

It functions in the pathway alkaloid biosynthesis; ergot alkaloid biosynthesis. Functionally, catalase; part of the gene cluster that mediates the biosynthesis of fungal ergot alkaloid. DmaW catalyzes the first step of ergot alkaloid biosynthesis by condensing dimethylallyl diphosphate (DMAP) and tryptophan to form 4-dimethylallyl-L-tryptophan. The second step is catalyzed by the methyltransferase easF that methylates 4-dimethylallyl-L-tryptophan in the presence of S-adenosyl-L-methionine, resulting in the formation of 4-dimethylallyl-L-abrine. The catalase easC and the FAD-dependent oxidoreductase easE then transform 4-dimethylallyl-L-abrine to chanoclavine-I which is further oxidized by easD in the presence of NAD(+), resulting in the formation of chanoclavine-I aldehyde. Agroclavine dehydrogenase easG then mediates the conversion of chanoclavine-I aldehyde to agroclavine via a non-enzymatic adduct reaction: the substrate is an iminium intermediate that is formed spontaneously from chanoclavine-I aldehyde in the presence of glutathione. Further conversion of agroclavine to paspalic acid is a two-step process involving oxidation of agroclavine to elymoclavine and of elymoclavine to paspalic acid, the second step being performed by the elymoclavine oxidase cloA. However, cloA does not encode a functional enzyme indicating that C.fusiformis terminates its ergot alkaloid pathway at elymoclavine. In Claviceps fusiformis (Ergot fungus), this protein is Catalase easC.